Here is a 780-residue protein sequence, read N- to C-terminus: Oocyte zinc finger protein XlCOF8.4 (780 aa).

15 consecutive C2H2-type zinc fingers follow at residues 250–272, 278–300, 306–328, 334–356, 362–384, 390–412, 418–440, 446–468, 474–496, 618–640, 646–668, 674–696, 702–724, 730–752, and 758–780; these read FPCSECGKCFAGSSELNVHRRTH, FSCSQCGKCFSNQTKLKYHHRTH, FSCSECGKCFSTPHVRARHQKTH, FPCSECGKCFARSSDVTVHRRTH, YSCSQCGKCFTRSSDLNVHRRTH, YSCSHCGKCFTTSSELNVHRRTH, YSCSECGKSFPTSSEFTSHWKTH, FSCVQCGKCFSKDTHLKYHYRTH, FSCFECGKCFTHNGSLKVHLKIH, LSCSECGKCFSTYHVLARHQKTH, FSCSECEKCYARSSDLNVHRRTH, YSCSECGKCFTRSSDFNVHRRTH, YSCSECGRCFPTSSVLTSHWRTH, FSCTECGKCFSRETYLKYHHRTH, and FSCSECGKCFTCNSSLKVHFQLH.

This sequence belongs to the krueppel C2H2-type zinc-finger protein family.

It is found in the nucleus. Functionally, may be involved in transcriptional regulation. In Xenopus laevis (African clawed frog), this protein is Oocyte zinc finger protein XlCOF8.4.